Reading from the N-terminus, the 604-residue chain is Serine protease 56 (604 aa).

Residues 1 to 22 form the signal peptide; it reads MPLAMLLLLLLLLSPDSQTAHG. Positions 70-94 are disordered; it reads CQGPGRPRPQAPLLQDPPEPVQCGE. Residues 75 to 89 show a composition bias toward pro residues; the sequence is RPRPQAPLLQDPPEP. A glycan (N-linked (GlcNAc...) asparagine) is linked at Asn101. Residues 109–341 enclose the Peptidase S1 domain; it reads IVGGSTAPSG…FKDWLQEQMS (233 aa). A disulfide bond links Cys134 and Cys150. Residues His149 and Asp195 each act as charge relay system in the active site. 3 cysteine pairs are disulfide-bonded: Cys229-Cys296, Cys260-Cys275, and Cys286-Cys317. The active-site Charge relay system is Ser290. Disordered regions lie at residues 424-452 and 578-604; these read RPGL…PREQ and PQAP…PPVP.

The protein belongs to the peptidase S1 family. In terms of tissue distribution, expressed in the eye: present in the retina and in the optic nerve.

The protein localises to the endoplasmic reticulum membrane. Serine protease required during eye development. The polypeptide is Serine protease 56 (Prss56) (Mus musculus (Mouse)).